We begin with the raw amino-acid sequence, 441 residues long: Glutamyl-tRNA reductase (441 aa).

Residues 49–52, S109, 114–116, and Q120 each bind substrate; these read TCNR and EGQ. Catalysis depends on C50, which acts as the Nucleophile. 198–203 is a binding site for NADP(+); that stretch reads GAGRMS.

The protein belongs to the glutamyl-tRNA reductase family. In terms of assembly, homodimer.

The enzyme catalyses (S)-4-amino-5-oxopentanoate + tRNA(Glu) + NADP(+) = L-glutamyl-tRNA(Glu) + NADPH + H(+). The protein operates within porphyrin-containing compound metabolism; protoporphyrin-IX biosynthesis; 5-aminolevulinate from L-glutamyl-tRNA(Glu): step 1/2. It functions in the pathway porphyrin-containing compound metabolism; chlorophyll biosynthesis. Its function is as follows. Catalyzes the NADPH-dependent reduction of glutamyl-tRNA(Glu) to glutamate 1-semialdehyde (GSA). The sequence is that of Glutamyl-tRNA reductase from Prochlorococcus marinus (strain NATL1A).